Reading from the N-terminus, the 129-residue chain is Glycine cleavage system H protein (129 aa).

The 83-residue stretch at 24–106 (SVVVGVTQHA…YGAGWIVEIE (83 aa)) folds into the Lipoyl-binding domain. At Lys-65 the chain carries N6-lipoyllysine.

Belongs to the GcvH family. In terms of assembly, the glycine cleavage system is composed of four proteins: P, T, L and H. (R)-lipoate is required as a cofactor.

The glycine cleavage system catalyzes the degradation of glycine. The H protein shuttles the methylamine group of glycine from the P protein to the T protein. The protein is Glycine cleavage system H protein of Myxococcus xanthus (strain DK1622).